Consider the following 427-residue polypeptide: CCA-adding enzyme (427 aa).

ATP contacts are provided by Ser50 and Lys53. CTP is bound by residues Ser50 and Lys53. Asp61, Asp63, and Asp112 together coordinate Mg(2+). Residues His135, Lys155, and Tyr164 each contribute to the ATP site. The CTP site is built by His135, Lys155, and Tyr164.

It belongs to the tRNA nucleotidyltransferase/poly(A) polymerase family. Archaeal CCA-adding enzyme subfamily. In terms of assembly, homodimer. The cofactor is Mg(2+).

The catalysed reaction is a tRNA precursor + 2 CTP + ATP = a tRNA with a 3' CCA end + 3 diphosphate. It carries out the reaction a tRNA with a 3' CCA end + 2 CTP + ATP = a tRNA with a 3' CCACCA end + 3 diphosphate. Catalyzes the addition and repair of the essential 3'-terminal CCA sequence in tRNAs without using a nucleic acid template. Adds these three nucleotides in the order of C, C, and A to the tRNA nucleotide-73, using CTP and ATP as substrates and producing inorganic pyrophosphate. tRNA 3'-terminal CCA addition is required both for tRNA processing and repair. Also involved in tRNA surveillance by mediating tandem CCA addition to generate a CCACCA at the 3' terminus of unstable tRNAs. While stable tRNAs receive only 3'-terminal CCA, unstable tRNAs are marked with CCACCA and rapidly degraded. The chain is CCA-adding enzyme from Picrophilus torridus (strain ATCC 700027 / DSM 9790 / JCM 10055 / NBRC 100828 / KAW 2/3).